Reading from the N-terminus, the 869-residue chain is Protein translocase subunit SecA (869 aa).

ATP contacts are provided by residues Gln-88, 106 to 110 (GEGKT), and Asp-509. Basic and acidic residues predominate over residues 818 to 840 (QDEGLKFNQREGEDAPAVREKKI). The tract at residues 818–869 (QDEGLKFNQREGEDAPAVREKKIPRNSPCPCGSGKKYKDCCGKSGPKKGILA) is disordered. Residues Cys-846, Cys-848, Cys-857, and Cys-858 each contribute to the Zn(2+) site.

The protein belongs to the SecA family. In terms of assembly, monomer and homodimer. Part of the essential Sec protein translocation apparatus which comprises SecA, SecYEG and auxiliary proteins SecDF-YajC and YidC. The cofactor is Zn(2+).

It is found in the cell inner membrane. Its subcellular location is the cytoplasm. It catalyses the reaction ATP + H2O + cellular proteinSide 1 = ADP + phosphate + cellular proteinSide 2.. In terms of biological role, part of the Sec protein translocase complex. Interacts with the SecYEG preprotein conducting channel. Has a central role in coupling the hydrolysis of ATP to the transfer of proteins into and across the cell membrane, serving as an ATP-driven molecular motor driving the stepwise translocation of polypeptide chains across the membrane. The polypeptide is Protein translocase subunit SecA (Campylobacter curvus (strain 525.92)).